The primary structure comprises 511 residues: LEM domain-containing protein 2 (511 aa).

Ala2 is subject to N-acetylalanine. The region spanning 2 to 42 (AGLSDLELRRELQALGFQPGPITDTTRNVYRNKLRRLRGEA) is the LEM domain. 2 disordered regions span residues 18 to 110 (FQPG…SDAS) and 128 to 206 (GLSY…AGRT). The span at 38–80 (LRGEARLRDDERLREDAGPREDAGPRGPERQREEARLREEAPL) shows a compositional bias: basic and acidic residues. Positions 80–112 (LRARPAASVLRSEPWPLSPSPPAPSAASDASGP) are interaction with lamin A/C complexes. The required for nuclear retention and interaction with LMNA isoform C stretch occupies residues 80 to 141 (LRARPAASVL…PPHAGPGPLR (62 aa)). Low complexity-rich tracts occupy residues 81-94 (RARP…SEPW) and 172-183 (APPSASARPHSA). 2 helical membrane passes run 221–241 (LLLW…WVKM) and 385–405 (VTHV…LILL). The interval 403 to 511 (ILLKYRWRKL…KPSSFSDSER (109 aa)) is winged-Helix (WH). Ser505, Ser507, and Ser509 each carry phosphoserine.

As to quaternary structure, interacts (via N-terminus) with LMNA isoform C (via C-terminus) (in vitro). Interacts (via LEM domain) with BANF1. Interacts (via C-terminus) with CHMP7. Interacts (via N-terminus) with tubulin; the interaction causes microtubule bundling and stabilization (in vitro). In terms of processing, phosphorylated; strongly phosphorylated in mitosis compared to G1/S. Ubiquitously expressed, including liver, brain, heart, skeletal muscle, lung, testis, spleen, kidney and white adipose tissue.

The protein resides in the nucleus inner membrane. Its subcellular location is the nucleus envelope. It localises to the cytoplasm. It is found in the cytoskeleton. The protein localises to the spindle. Its function is as follows. Nuclear lamina-associated inner nuclear membrane protein that is involved in nuclear structure organization and maintenance of nuclear envelope (NE) integrity and NE reformation after mitosis. Plays a role as transmembrane adapter for the endosomal sorting complexes required for transport (ESCRT), and is thereby involved in ESCRT-mediated NE reformation. Promotes ESCRT-mediated NE closure by recruiting CHMP7 and downstream ESCRT-III proteins IST1/CHMP8 and CHMP2A to the reforming NE during anaphase. During nuclear reassembly, condenses into a liquid-like coating around microtubule spindles and coassembles with CHMP7 to form a macromolecular O-ring seal at the confluence between membranes, chromatin, and the spindle to facilitate early nuclear sealing. Plays a role in the organization of heterochromatin associated with the NE and in the maintenance of NE organization under mechanical stress. Required for embryonic development and is involved in regulation of several signaling pathways such as MAPK and AKT. Required for myoblast differentiation involving regulation of ERK signaling. Essential for cardiac homeostasis and proper heart function. This chain is LEM domain-containing protein 2 (Lemd2), found in Mus musculus (Mouse).